Consider the following 224-residue polypeptide: MDDDAQMVAIDKDQLARMRGEYGPEKDGCGDLDFDWLDDGWLTLLRRWLNDAQRAGVSEPNAMVLATVADGKPVTRSVLCKILDESGVAFFTSYTSAKGEQLAVTPYASATFPWYQLGRQAHVQGPVSKVSTEEIFTYWSMRPRGAQLGAWASQQSRPVGSRAQLDNQLAEVTRRFADQDQIPVPPGWGGYRIAPEIVEFWQGRENRMHNRIRVANGRLERLQP.

Residues 19–22 (RGEY) and lysine 81 each bind substrate. Residues 76 to 81 (RSVLCK), 91 to 92 (FT), lysine 98, and glutamine 120 contribute to the FMN site. Substrate is bound by residues tyrosine 138 and arginine 142. Residues 155–156 (QS) and tryptophan 201 each bind FMN. Residue 207–209 (RMH) coordinates substrate. Residue arginine 211 participates in FMN binding.

Belongs to the pyridoxamine 5'-phosphate oxidase family. As to quaternary structure, homodimer. Requires FMN as cofactor.

The catalysed reaction is pyridoxamine 5'-phosphate + O2 + H2O = pyridoxal 5'-phosphate + H2O2 + NH4(+). The enzyme catalyses pyridoxine 5'-phosphate + O2 = pyridoxal 5'-phosphate + H2O2. It functions in the pathway cofactor metabolism; pyridoxal 5'-phosphate salvage; pyridoxal 5'-phosphate from pyridoxamine 5'-phosphate: step 1/1. Its pathway is cofactor metabolism; pyridoxal 5'-phosphate salvage; pyridoxal 5'-phosphate from pyridoxine 5'-phosphate: step 1/1. Functionally, catalyzes the oxidation of either pyridoxine 5'-phosphate (PNP) or pyridoxamine 5'-phosphate (PMP) into pyridoxal 5'-phosphate (PLP). This is Pyridoxine/pyridoxamine 5'-phosphate oxidase from Mycobacterium bovis (strain ATCC BAA-935 / AF2122/97).